Consider the following 1897-residue polypeptide: Spectinabilin polyketide synthase system protein NorA (1897 aa).

A Ketosynthase family 3 (KS3) domain is found at 112–536 (EEPIAIVGMG…GTNAHIILEQ (425 aa)). Catalysis depends on for beta-ketoacyl synthase activity residues C283, H418, and H458. The tract at residues 538–563 (APEPERPHAPEADGEPRPLPWPVSGH) is disordered. The span at 540-553 (EPERPHAPEADGEP) shows a compositional bias: basic and acidic residues. Residues 644–962 (FVFPGQGSQW…VAEAHVHGVA (319 aa)) form the Malonyl-CoA:ACP transacylase (MAT) domain. Residues 1012-1139 (HPLLGAAIPL…GTLAPGGGHP (128 aa)) form an N-terminal hotdog fold region. Residues 1012 to 1289 (HPLLGAAIPL…MRPVTAEALH (278 aa)) enclose the PKS/mFAS DH domain. The Proton acceptor; for dehydratase activity role is filled by H1045. The segment at 1113–1152 (SRPEDAGADEPWTRHAEGTLAPGGGHPRQDPGPWPPTGAR) is disordered. Positions 1151-1289 (AREIDLDDCY…MRPVTAEALH (139 aa)) are C-terminal hotdog fold. The Proton donor; for dehydratase activity role is filled by D1211. A Ketoreductase (KR) domain is found at 1494–1671 (GTVLVTGGLG…GVSMGWGMWA (178 aa)). The Carrier domain occupies 1777 to 1852 (ALLLGVVRGH…ALSRYLRTLL (76 aa)). O-(pantetheine 4'-phosphoryl)serine is present on S1812. The disordered stretch occupies residues 1854–1873 (PDPAPAPTAPDGQPGPDQAD). Residues 1862-1871 (APDGQPGPDQ) show a composition bias toward low complexity.

The spectinabilin polyketide synthase complex is composed of 4 proteins, NorA, NorA', NorB and NorC. The complex comprises 6 modules with a total of 28 catalytic domains catalyzing 7 chain elongations. NorA comprises one module, NorA' two modules, NorB one module and NorC two modules. Pantetheine 4'-phosphate serves as cofactor.

It carries out the reaction 4-nitrobenzoyl-CoA + 6 (S)-methylmalonyl-CoA + malonyl-CoA + 6 NADPH + 12 H(+) = demethyldeoxyspectinabilin + 7 CO2 + 6 NADP(+) + 8 CoA + 5 H2O. Its pathway is antibiotic biosynthesis. The protein operates within polyketide biosynthesis. Component of a type I modular polyketide synthase (PKS) that generates the backbone of the antibiotic spectinabilin (also known as neoaureothin), a nitroaryl-substituted polyketide metabolite. This PKS system accepts the unusual starter unit 4-nitrobenzoyl-CoA and extends it by 6 molecules of (S)-methylmalonyl-CoA and a single molecule of malonyl-CoA. The first module, NorA, is used twice in an iterative fashion. This is Spectinabilin polyketide synthase system protein NorA from Streptomyces orinoci (Streptoverticillium orinoci).